The chain runs to 264 residues: Thymidylate synthase (264 aa).

R21 lines the dUMP pocket. Residue H51 participates in (6R)-5,10-methylene-5,6,7,8-tetrahydrofolate binding. 126–127 is a binding site for dUMP; it reads RR. The active-site Nucleophile is C146. DUMP-binding positions include 166–169, N177, and 207–209; these read RSCD and HLY. Residue D169 coordinates (6R)-5,10-methylene-5,6,7,8-tetrahydrofolate. A263 is a binding site for (6R)-5,10-methylene-5,6,7,8-tetrahydrofolate.

The protein belongs to the thymidylate synthase family. Bacterial-type ThyA subfamily. As to quaternary structure, homodimer.

The protein localises to the cytoplasm. It catalyses the reaction dUMP + (6R)-5,10-methylene-5,6,7,8-tetrahydrofolate = 7,8-dihydrofolate + dTMP. Its pathway is pyrimidine metabolism; dTTP biosynthesis. Functionally, catalyzes the reductive methylation of 2'-deoxyuridine-5'-monophosphate (dUMP) to 2'-deoxythymidine-5'-monophosphate (dTMP) while utilizing 5,10-methylenetetrahydrofolate (mTHF) as the methyl donor and reductant in the reaction, yielding dihydrofolate (DHF) as a by-product. This enzymatic reaction provides an intracellular de novo source of dTMP, an essential precursor for DNA biosynthesis. This is Thymidylate synthase from Shewanella amazonensis (strain ATCC BAA-1098 / SB2B).